The following is a 1380-amino-acid chain: Protein TORNADO 1 (1380 aa).

LRR repeat units follow at residues 26 to 46 (FFNLQTLSFSSSGNTTHCQLI), 47 to 70 (TESSMNINVTRDNLTSLSQIFIEL), 105 to 132 (TSKIKQLAFRKNRFSEQCLNELSEILKR), 161 to 184 (NDSLEELQIWEDSIGSKGAEELSR), 266 to 289 (NTTVRSLDMTGAKLNSRWAKEFRW), 299 to 322 (EVKLSKTGLKDKAVVYIAAGLFKN), 323 to 346 (KSLQSLYVDGNRFGSVGVEDLLCP), 348 to 371 (SRFSALQLQANITLRSIVFGGSNT), 446 to 472 (INPLIEEIDLARTPLQDSGKADEIYQK), and 476 to 502 (NGRKIDEAETDDSLKDMPLTEPKSVRA). A Roc domain is found at 493–702 (PLTEPKSVRA…HHIRMTSKAI (210 aa)). GTP is bound by residues 506–513 (GQNYAGKT) and 567–571 (NLAGQ). The chain crosses the membrane as a helical span at residues 574–594 (FFALHDLMFPSPCFFLIVLSL). LRR repeat units follow at residues 640–665 (LTHSEKINLQSESFQATVGCIQRLRD), 688–712 (VSKLTHHIRMTSKAILQRVPRVYQL), 799–826 (LTQLIKLDVRKQSTGERNGFVSRKELEK), 1023–1046 (QSQFVSLHRLKEALSSVPAETMYD), 1131–1154 (EAVLQRLKIIEQEIRDLKQEIQGL), and 1229–1254 (QLGCDVMQIDNQAVKCLAPYMTNFMK). 641 to 644 (THSE) is a GTP binding site. Residues 757 to 931 (NIQIVETRRH…LQVHLHNRIM (175 aa)) enclose the COR domain. 2 helical membrane-spanning segments follow: residues 1255-1275 (LVTFALRIGANWAAGMGHMIP) and 1287-1307 (PAVMTGAAGAAGAIGVAAALG).

In terms of tissue distribution, expressed in seedlings, roots, leaves, stems and flowers. Present in ovules, prominently in nucellus and integuments.

Its subcellular location is the membrane. Its function is as follows. Involved in the basipetal transport of auxin (IAA) that modulates growth and organs organization. Required for initial divisions in the epidermal/lateral root cap leading to the formation of epidermal cells and a clone of lateral root cap cells, as well as for the maintenance of the radial pattern of cell specification in the root, thus regulating the distinction between the lateral root cap and epidermis. The chain is Protein TORNADO 1 (TRN1) from Arabidopsis thaliana (Mouse-ear cress).